The following is a 269-amino-acid chain: Formamidopyrimidine-DNA glycosylase (269 aa).

The active-site Schiff-base intermediate with DNA is the Pro2. The active-site Proton donor is Glu3. Lys57 serves as the catalytic Proton donor; for beta-elimination activity. DNA-binding residues include His90, Arg109, and Lys150. The segment at 235 to 269 (QVYGRAGELCRRCGNVIEIAKHGQRSTFFCRHCQH) adopts an FPG-type zinc-finger fold. The Proton donor; for delta-elimination activity role is filled by Arg259.

This sequence belongs to the FPG family. As to quaternary structure, monomer. Zn(2+) is required as a cofactor.

The enzyme catalyses Hydrolysis of DNA containing ring-opened 7-methylguanine residues, releasing 2,6-diamino-4-hydroxy-5-(N-methyl)formamidopyrimidine.. The catalysed reaction is 2'-deoxyribonucleotide-(2'-deoxyribose 5'-phosphate)-2'-deoxyribonucleotide-DNA = a 3'-end 2'-deoxyribonucleotide-(2,3-dehydro-2,3-deoxyribose 5'-phosphate)-DNA + a 5'-end 5'-phospho-2'-deoxyribonucleoside-DNA + H(+). In terms of biological role, involved in base excision repair of DNA damaged by oxidation or by mutagenic agents. Acts as a DNA glycosylase that recognizes and removes damaged bases. Has a preference for oxidized purines, such as 7,8-dihydro-8-oxoguanine (8-oxoG). Has AP (apurinic/apyrimidinic) lyase activity and introduces nicks in the DNA strand. Cleaves the DNA backbone by beta-delta elimination to generate a single-strand break at the site of the removed base with both 3'- and 5'-phosphates. This is Formamidopyrimidine-DNA glycosylase from Yersinia enterocolitica serotype O:8 / biotype 1B (strain NCTC 13174 / 8081).